Reading from the N-terminus, the 374-residue chain is Pectate lyase 3 (374 aa).

An N-terminal signal peptide occupies residues 1-22 (MKYLLPSAAAGLLLLAAQPTMA). A disulfide bridge links Cys-93 with Cys-176. 4 residues coordinate Ca(2+): Asp-150, Asp-152, Glu-187, and Asp-191. Arg-239 is a catalytic residue. Cysteines 350 and 373 form a disulfide.

This sequence belongs to the polysaccharide lyase 1 family. PLADES subfamily. It depends on Ca(2+) as a cofactor.

The protein localises to the secreted. It carries out the reaction Eliminative cleavage of (1-&gt;4)-alpha-D-galacturonan to give oligosaccharides with 4-deoxy-alpha-D-galact-4-enuronosyl groups at their non-reducing ends.. The protein operates within glycan metabolism; pectin degradation; 2-dehydro-3-deoxy-D-gluconate from pectin: step 2/5. In terms of biological role, involved in maceration and soft-rotting of plant tissue. This chain is Pectate lyase 3 (pel3), found in Pectobacterium carotovorum subsp. carotovorum (Erwinia carotovora subsp. carotovora).